The chain runs to 235 residues: Ribonuclease PH (235 aa).

Phosphate contacts are provided by residues Arg-86 and 124–126 (GTR).

Belongs to the RNase PH family. Homohexameric ring arranged as a trimer of dimers.

The catalysed reaction is tRNA(n+1) + phosphate = tRNA(n) + a ribonucleoside 5'-diphosphate. Phosphorolytic 3'-5' exoribonuclease that plays an important role in tRNA 3'-end maturation. Removes nucleotide residues following the 3'-CCA terminus of tRNAs; can also add nucleotides to the ends of RNA molecules by using nucleoside diphosphates as substrates, but this may not be physiologically important. Probably plays a role in initiation of 16S rRNA degradation (leading to ribosome degradation) during starvation. The sequence is that of Ribonuclease PH from Legionella pneumophila (strain Paris).